Consider the following 224-residue polypeptide: Transcription factor HEC3 (224 aa).

Disordered stretches follow at residues 22–42 (SSNNNNKNDDHHHQHNNDPIG) and 68–88 (SLTTTTLLSGDQEDDEDEEEP). Basic and acidic residues predominate over residues 28-37 (KNDDHHHQHN). Low complexity predominate over residues 68 to 77 (SLTTTTLLSG). Residues 78–88 (DQEDDEDEEEP) are compositionally biased toward acidic residues. A bHLH domain is found at 125 to 174 (ISDDPQSVAARHRRERISERIRILQRLVPGGTKMDTASMLDEAIRYVKFL). The disordered stretch occupies residues 183-224 (NNTGYTPPPPQDQASQAVTTSWVSPPPPPSFGRGGRGVGELI). Positions 194 to 204 (DQASQAVTTSW) are enriched in polar residues. Positions 214–224 (GRGGRGVGELI) are enriched in gly residues.

In terms of assembly, homodimer. Interacts with SPT. In terms of tissue distribution, gynoecium.

It localises to the nucleus. Required for the female reproductive tract development and fertility. This chain is Transcription factor HEC3 (HEC3), found in Arabidopsis thaliana (Mouse-ear cress).